Here is a 392-residue protein sequence, read N- to C-terminus: Formate-dependent phosphoribosylglycinamide formyltransferase (392 aa).

Residues 22–23 and glutamate 82 contribute to the N(1)-(5-phospho-beta-D-ribosyl)glycinamide site; that span reads EL. Residues arginine 114, lysine 155, 160-165, 195-198, and glutamate 203 each bind ATP; these read SSGKGQ and EGVV. Positions 119 to 308 constitute an ATP-grasp domain; the sequence is RLAAEELGLP…EFALHVRAFL (190 aa). The Mg(2+) site is built by glutamate 267 and glutamate 279. N(1)-(5-phospho-beta-D-ribosyl)glycinamide is bound by residues aspartate 286, lysine 355, and 362 to 363; that span reads RR.

Belongs to the PurK/PurT family. In terms of assembly, homodimer.

The catalysed reaction is N(1)-(5-phospho-beta-D-ribosyl)glycinamide + formate + ATP = N(2)-formyl-N(1)-(5-phospho-beta-D-ribosyl)glycinamide + ADP + phosphate + H(+). It functions in the pathway purine metabolism; IMP biosynthesis via de novo pathway; N(2)-formyl-N(1)-(5-phospho-D-ribosyl)glycinamide from N(1)-(5-phospho-D-ribosyl)glycinamide (formate route): step 1/1. Its function is as follows. Involved in the de novo purine biosynthesis. Catalyzes the transfer of formate to 5-phospho-ribosyl-glycinamide (GAR), producing 5-phospho-ribosyl-N-formylglycinamide (FGAR). Formate is provided by PurU via hydrolysis of 10-formyl-tetrahydrofolate. This Salmonella choleraesuis (strain SC-B67) protein is Formate-dependent phosphoribosylglycinamide formyltransferase.